The sequence spans 162 residues: FCS-Like Zinc finger 6 (162 aa).

Disordered stretches follow at residues 25-47 (NLPSESEPSNQQKPTVASPYGSN) and 121-162 (RQEQ…AAAV). A compositionally biased stretch (polar residues) spans 27-47 (PSESEPSNQQKPTVASPYGSN). The FLZ-type zinc finger occupies 88–132 (HFLRSCALCERLLVPGRDIYMYRGDKAFCSSECRQEQMAQDERKE). A compositionally biased stretch (low complexity) spans 147–162 (APARAKPGKGRAAAAV).

It belongs to the FLZ family. Interacts with KIN10 and KIN11 via its FLZ-type zinc finger domain. In terms of tissue distribution, early expressed in hypocotyl and cotyledon. Later expressed in old or senescing leaves and in pistil, pollen and filament of open flowers.

Its subcellular location is the nucleus. It localises to the cytoplasm. It is found in the endoplasmic reticulum. May act as an adapter to facilitate the interaction of SnRK1 complex with effector proteins, conferring tissue- and stimulus-type specific differences in the SnRK1 regulation pathway. Negatively regulates KIN10 leading to a repression of the SnRK1 signaling pathway. The polypeptide is FCS-Like Zinc finger 6 (Arabidopsis thaliana (Mouse-ear cress)).